A 137-amino-acid polypeptide reads, in one-letter code: MSSRRLLKAAEAIREVVANAIVTEVRDPRVRDVTVIGVEVSPDMREAKVKVSVMGDETQKNLSLRGLQNSAGFLQSKIANRMDTRYTPKLRFEVDRGQENAMTVSEILARIQQEKEGATDDRDQNDSGEDATPHSND.

Positions 110–137 (RIQQEKEGATDDRDQNDSGEDATPHSND) are disordered. Positions 112-125 (QQEKEGATDDRDQN) are enriched in basic and acidic residues.

This sequence belongs to the RbfA family. As to quaternary structure, monomer. Binds 30S ribosomal subunits, but not 50S ribosomal subunits or 70S ribosomes.

The protein resides in the cytoplasm. One of several proteins that assist in the late maturation steps of the functional core of the 30S ribosomal subunit. Associates with free 30S ribosomal subunits (but not with 30S subunits that are part of 70S ribosomes or polysomes). Required for efficient processing of 16S rRNA. May interact with the 5'-terminal helix region of 16S rRNA. In Rhodopirellula baltica (strain DSM 10527 / NCIMB 13988 / SH1), this protein is Ribosome-binding factor A.